The sequence spans 226 residues: Chalcone--flavanone isomerase 3 (226 aa).

Positions 49, 114, and 191 each coordinate substrate.

The protein belongs to the chalcone isomerase family.

It catalyses the reaction a chalcone = a flavanone.. It participates in secondary metabolite biosynthesis; flavonoid biosynthesis. Its function is as follows. Catalyzes the intramolecular cyclization of bicyclic chalcones into tricyclic (S)-flavanones. Responsible for the isomerization of 4,2',4',6'-tetrahydroxychalcone (also termed chalcone) into naringenin. This is Chalcone--flavanone isomerase 3 (CHI3) from Glycine max (Soybean).